Consider the following 221-residue polypeptide: MASLISDIEPPTSTTSDLVRRKKRSSASSAASSRSSASSVSGEIHARWRSEKQQRIYSAKLFQALQQVRLNSSASTSSSPTAQKRGKAVREAADRALAVSARGRTLWSRAILANRIKLKFRKQRRPRATMAIPAMTTVVSSSSNRSRKRRVSVLRLNKKSIPDVNRKVRVLGRLVPGCGKQSVPVILEEATDYIQALEMQVRAMNSLVQLLSSYGSAPPPI.

Disordered regions lie at residues 1 to 45 and 70 to 89; these read MASL…GEIH and LNSSASTSSSPTAQKRGKAV. Low complexity-rich tracts occupy residues 26 to 41 and 72 to 82; these read SASSAASSRSSASSVS and SSASTSSSPTA. The 50-residue stretch at 148–197 folds into the bHLH domain; it reads KRRVSVLRLNKKSIPDVNRKVRVLGRLVPGCGKQSVPVILEEATDYIQAL.

In terms of assembly, homodimer. Interacts with PRE3. Binds to RSA1.

It localises to the nucleus. Functionally, bHLH transcription factor that binds DNA on specific sequence 5'-CANNTG-3' in target gene promoters. Negatively regulates brassinosteroid signaling. Together with BHLH148/RITF1, regulates the transcription of several genes involved in the detoxification of reactive oxygen species (ROS) generated by salt (NaCl) stress. Confers tolerance to salt and to the oxidative stress-inducing reagents hydrogen peroxide H(2)O(2) and methyl viologen (MV). The sequence is that of Transcription factor bHLH148 from Arabidopsis thaliana (Mouse-ear cress).